Consider the following 877-residue polypeptide: Clumping factor B (877 aa).

The N-terminal stretch at methionine 1–alanine 44 is a signal peptide. A YSIRK-G/S signaling motif motif is present at residues tyrosine 15–serine 26. Polar residues-rich tracts occupy residues alanine 44–alanine 61 and methionine 68–serine 95. A disordered region spans residues alanine 44–threonine 192. Residues serine 45–asparagine 542 form a ligand binding A region region. Residues threonine 96–proline 119 are compositionally biased toward low complexity. Residues glutamine 120–serine 189 are compositionally biased toward polar residues. The MIDAS-like motif signature appears at aspartate 272–serine 276. A disordered region spans residues tyrosine 530 to asparagine 849. Pro residues predominate over residues aspartate 545–glutamate 555. Positions proline 556–aspartate 801 are enriched in acidic residues. The span at arginine 805–proline 816 shows a compositional bias: polar residues. Basic and acidic residues predominate over residues histidine 833–glutamate 846. Positions leucine 838 to glycine 842 match the LPXTG sorting signal motif. Residue threonine 841 is modified to Pentaglycyl murein peptidoglycan amidated threonine. A propeptide spans glycine 842–alanine 877 (removed by sortase).

This sequence belongs to the serine-aspartate repeat-containing protein (SDr) family. Proteolytically cleaved by aureolysin (aur). This cleavage leads to the inactivation of ClfB.

The protein resides in the secreted. The protein localises to the cell wall. Functionally, cell surface-associated protein implicated in virulence by promoting bacterial attachment to both alpha- and beta-chains of human fibrinogen and inducing the formation of bacterial clumps. This is Clumping factor B (clfB) from Staphylococcus aureus (strain Mu50 / ATCC 700699).